The primary structure comprises 1299 residues: Nuclear factor related to kappa-B-binding protein (1299 aa).

Positions 39–156 (PEDLLEDPEI…LKQILASRSD (118 aa)) constitute a DEUBAD domain. Disordered regions lie at residues 163–187 (RSGP…REWR) and 204–232 (GDTA…PAVP). Residues 216–232 (SSWLPSSPARSPSPAVP) show a composition bias toward low complexity. 2 positions are modified to phosphoserine: S228 and S298. Residue K327 forms a Glycyl lysine isopeptide (Lys-Gly) (interchain with G-Cter in SUMO2) linkage. At S351 the chain carries Phosphoserine. The tract at residues 370–495 (LGINEISSSF…FCKQENEDSS (126 aa)) is winged-helix like domain. K469 participates in a covalent cross-link: Glycyl lysine isopeptide (Lys-Gly) (interchain with G-Cter in SUMO2). A Glycyl lysine isopeptide (Lys-Gly) (interchain with G-Cter in SUMO1); alternate cross-link involves residue K488. Residue K488 forms a Glycyl lysine isopeptide (Lys-Gly) (interchain with G-Cter in SUMO2); alternate linkage. Disordered stretches follow at residues 669–760 (AAKA…SSSG), 882–902 (LPAT…TSAP), and 1017–1043 (VHAA…TVVK). 3 stretches are compositionally biased toward low complexity: residues 677–688 (QQKPKPPSKVKS), 695–715 (IKVL…DSSM), and 723–733 (VTPTTPALPAI). The span at 744–760 (NKSGPSTVSEPAKSSSG) shows a compositional bias: polar residues. Low complexity-rich tracts occupy residues 892-902 (PATSSPGTSAP) and 1019-1043 (AADS…TVVK). Phosphoserine is present on S1022. K1237 carries the post-translational modification N6-acetyllysine. At S1291 the chain carries Phosphoserine.

It belongs to the NFRKB family. Component of the chromatin remodeling INO80 complex; specifically part of a complex module associated with the N-terminus of INO80. Interacts with UCHL5; NFRKB competes with ADRM1 for interaction with UCHL5. As to expression, expressed in thymus, brain, testes, spleen and liver.

The protein resides in the nucleus. Functionally, binds to the DNA consensus sequence 5'-GGGGAATCTCC-3'. In terms of biological role, putative regulatory component of the chromatin remodeling INO80 complex which is involved in transcriptional regulation, DNA replication and probably DNA repair. Modulates the deubiquitinase activity of UCHL5 in the INO80 complex. This Homo sapiens (Human) protein is Nuclear factor related to kappa-B-binding protein (NFRKB).